Reading from the N-terminus, the 101-residue chain is Small ribosomal subunit protein uS14 (101 aa).

Basic and acidic residues predominate over residues methionine 1–asparagine 10. A disordered region spans residues methionine 1–lysine 23.

Belongs to the universal ribosomal protein uS14 family. In terms of assembly, part of the 30S ribosomal subunit. Contacts proteins S3 and S10.

Binds 16S rRNA, required for the assembly of 30S particles and may also be responsible for determining the conformation of the 16S rRNA at the A site. The protein is Small ribosomal subunit protein uS14 of Nitrobacter hamburgensis (strain DSM 10229 / NCIMB 13809 / X14).